Here is a 471-residue protein sequence, read N- to C-terminus: ATP synthase subunit beta (471 aa).

159–166 (GGAGVGKT) is an ATP binding site.

Belongs to the ATPase alpha/beta chains family. In terms of assembly, F-type ATPases have 2 components, CF(1) - the catalytic core - and CF(0) - the membrane proton channel. CF(1) has five subunits: alpha(3), beta(3), gamma(1), delta(1), epsilon(1). CF(0) has four main subunits: a(1), b(1), b'(1) and c(9-12).

It is found in the cell membrane. The catalysed reaction is ATP + H2O + 4 H(+)(in) = ADP + phosphate + 5 H(+)(out). In terms of biological role, produces ATP from ADP in the presence of a proton gradient across the membrane. The catalytic sites are hosted primarily by the beta subunits. In Heliobacterium modesticaldum (strain ATCC 51547 / Ice1), this protein is ATP synthase subunit beta.